The chain runs to 215 residues: Superoxide dismutase [Mn] (215 aa).

Mn(2+)-binding residues include H27, H83, D170, and H174.

Belongs to the iron/manganese superoxide dismutase family. As to quaternary structure, homodimer. Requires Mn(2+) as cofactor.

The catalysed reaction is 2 superoxide + 2 H(+) = H2O2 + O2. In terms of biological role, destroys superoxide anion radicals which are normally produced within the cells and which are toxic to biological systems. In Haemophilus influenzae (strain ATCC 51907 / DSM 11121 / KW20 / Rd), this protein is Superoxide dismutase [Mn] (sodA).